The following is a 310-amino-acid chain: tRNA-cytidine(32) 2-sulfurtransferase (310 aa).

The PP-loop motif motif lies at 48–53; sequence SGGKDS. [4Fe-4S] cluster is bound by residues cysteine 123, cysteine 126, and cysteine 214.

The protein belongs to the TtcA family. As to quaternary structure, homodimer. It depends on Mg(2+) as a cofactor. [4Fe-4S] cluster is required as a cofactor.

It localises to the cytoplasm. It carries out the reaction cytidine(32) in tRNA + S-sulfanyl-L-cysteinyl-[cysteine desulfurase] + AH2 + ATP = 2-thiocytidine(32) in tRNA + L-cysteinyl-[cysteine desulfurase] + A + AMP + diphosphate + H(+). Its pathway is tRNA modification. Its function is as follows. Catalyzes the ATP-dependent 2-thiolation of cytidine in position 32 of tRNA, to form 2-thiocytidine (s(2)C32). The sulfur atoms are provided by the cysteine/cysteine desulfurase (IscS) system. The chain is tRNA-cytidine(32) 2-sulfurtransferase from Vibrio vulnificus (strain CMCP6).